A 142-amino-acid polypeptide reads, in one-letter code: HTH-type transcriptional regulator MntR (142 aa).

Residues 1–63 (MPTPSMEDYI…YEKYRGLVLT (63 aa)) enclose the HTH dtxR-type domain. Residues Asp-8, Glu-11, His-77, Glu-99, Glu-102, and His-103 each coordinate Mn(2+).

Belongs to the DtxR/MntR family. In terms of assembly, homodimer.

The protein resides in the cytoplasm. DNA binding is strongly activated by Mn(2+). Its function is as follows. Central regulator of manganese homeostasis. In Bacillus cytotoxicus (strain DSM 22905 / CIP 110041 / 391-98 / NVH 391-98), this protein is HTH-type transcriptional regulator MntR.